Reading from the N-terminus, the 180-residue chain is Small ribosomal subunit protein uS5 (180 aa).

The region spanning 24 to 87 (MIEKLVAVNR…EQARKNLVSV (64 aa)) is the S5 DRBM domain.

This sequence belongs to the universal ribosomal protein uS5 family. In terms of assembly, part of the 30S ribosomal subunit. Contacts proteins S4 and S8.

Functionally, with S4 and S12 plays an important role in translational accuracy. Located at the back of the 30S subunit body where it stabilizes the conformation of the head with respect to the body. The chain is Small ribosomal subunit protein uS5 from Stenotrophomonas maltophilia (strain R551-3).